A 304-amino-acid chain; its full sequence is 33 kDa chaperonin (304 aa).

2 disulfides stabilise this stretch: Cys236-Cys238 and Cys269-Cys272.

The protein belongs to the HSP33 family. Post-translationally, under oxidizing conditions two disulfide bonds are formed involving the reactive cysteines. Under reducing conditions zinc is bound to the reactive cysteines and the protein is inactive.

Its subcellular location is the cytoplasm. In terms of biological role, redox regulated molecular chaperone. Protects both thermally unfolding and oxidatively damaged proteins from irreversible aggregation. Plays an important role in the bacterial defense system toward oxidative stress. The chain is 33 kDa chaperonin from Pelobacter propionicus (strain DSM 2379 / NBRC 103807 / OttBd1).